The following is a 161-amino-acid chain: Protein-export protein SecB (161 aa).

The protein belongs to the SecB family. In terms of assembly, homotetramer, a dimer of dimers. One homotetramer interacts with 1 SecA dimer.

It localises to the cytoplasm. In terms of biological role, one of the proteins required for the normal export of preproteins out of the cell cytoplasm. It is a molecular chaperone that binds to a subset of precursor proteins, maintaining them in a translocation-competent state. It also specifically binds to its receptor SecA. This chain is Protein-export protein SecB, found in Pseudomonas fluorescens (strain Pf0-1).